The following is a 29-amino-acid chain: Cytochrome b6-f complex subunit 8 (29 aa).

The chain crosses the membrane as a helical span at residues 3–23 (LITITWASVMVAFTFSLSLVV).

It belongs to the PetN family. The 4 large subunits of the cytochrome b6-f complex are cytochrome b6, subunit IV (17 kDa polypeptide, PetD), cytochrome f and the Rieske protein, while the 4 small subunits are PetG, PetL, PetM and PetN. The complex functions as a dimer.

Its subcellular location is the plastid. It localises to the chloroplast thylakoid membrane. Functionally, component of the cytochrome b6-f complex, which mediates electron transfer between photosystem II (PSII) and photosystem I (PSI), cyclic electron flow around PSI, and state transitions. This Chaetosphaeridium globosum (Charophycean green alga) protein is Cytochrome b6-f complex subunit 8.